A 308-amino-acid polypeptide reads, in one-letter code: GTP-binding protein RAD (308 aa).

Gly residues predominate over residues 1–16 (MTLNGGGSGAGGSRGG). The tract at residues 1 to 88 (MTLNGGGSGA…SLSSGGSDSD (88 aa)) is disordered. At arginine 24 the chain carries Omega-N-methylarginine. Serine 26 carries the phosphoserine modification. Residues 48–68 (QAALTPGALTAAAAGTGTQGP) show a composition bias toward low complexity. Residues 98–105 (GAPGVGKS) and 203–206 (NKSD) each bind GTP. The tract at residues 278–297 (AKRFLGRIVARNSRKMAFRA) is calmodulin-binding.

Belongs to the small GTPase superfamily. RGK family. In terms of assembly, interacts with calmodulin preferentially in the inactive, GDP-bound form. Binds CAMKII which is capable of phosphorylating RAD in vitro. Interacts with CAMK2D. Interacts with CACNB2; interaction may be involved in beta-adrenergic regulation of heart rate and contractile force. Interaction with CACNB2 regulates the trafficking of CACNA1C to the cell membrane. Most abundantly expressed in the heart. Also found in the skeletal muscle and lung. Lesser amounts in placenta and kidney. Also detected in adipose tissue. Overexpressed in muscle of type II diabetic humans.

It localises to the cell membrane. Its function is as follows. May regulate basal voltage-dependent L-type Ca(2+) currents and be required for beta-adrenergic augmentation of Ca(2+) influx in cardiomyocytes, thereby regulating increases in heart rate and contractile force. May play an important role in cardiac antiarrhythmia via the strong suppression of voltage-gated L-type Ca(2+) currents. Regulates voltage-dependent L-type calcium channel subunit alpha-1C trafficking to the cell membrane. Inhibits cardiac hypertrophy through the calmodulin-dependent kinase II (CaMKII) pathway. Inhibits phosphorylation and activation of CAMK2D. The chain is GTP-binding protein RAD (RRAD) from Homo sapiens (Human).